The following is a 119-amino-acid chain: Protein TusC (119 aa).

This sequence belongs to the DsrF/TusC family. Heterohexamer, formed by a dimer of trimers. The hexameric TusBCD complex contains 2 copies each of TusB, TusC and TusD. The TusBCD complex interacts with TusE.

The protein resides in the cytoplasm. Part of a sulfur-relay system required for 2-thiolation of 5-methylaminomethyl-2-thiouridine (mnm(5)s(2)U) at tRNA wobble positions. The chain is Protein TusC from Klebsiella pneumoniae subsp. pneumoniae (strain ATCC 700721 / MGH 78578).